A 432-amino-acid chain; its full sequence is Alpha-enolase (432 aa).

Residue serine 40 participates in Mg(2+) binding. Substrate is bound by residues histidine 158 and glutamate 167. Glutamate 210 (proton donor) is an active-site residue. Mg(2+)-binding residues include aspartate 245, glutamate 293, and aspartate 318. Positions 293 and 318 each coordinate substrate. Lysine 343 functions as the Proton acceptor in the catalytic mechanism. Residues 370 to 373 (SHRS) and lysine 394 contribute to the substrate site.

The protein belongs to the enolase family. As to quaternary structure, dimer. It depends on Mg(2+) as a cofactor.

The protein localises to the cytoplasm. The catalysed reaction is (2R)-2-phosphoglycerate = phosphoenolpyruvate + H2O. It functions in the pathway carbohydrate degradation; glycolysis; pyruvate from D-glyceraldehyde 3-phosphate: step 4/5. In terms of biological role, multifunctional enzyme that, as well as its role in glycolysis, plays a part in various processes such as growth control, hypoxia tolerance and allergic responses. The protein is Alpha-enolase of Thunnus albacares (Yellowfin tuna).